Here is a 70-residue protein sequence, read N- to C-terminus: Small ribosomal subunit protein bS21 (70 aa).

The protein belongs to the bacterial ribosomal protein bS21 family.

This is Small ribosomal subunit protein bS21 from Sulfurimonas denitrificans (strain ATCC 33889 / DSM 1251) (Thiomicrospira denitrificans (strain ATCC 33889 / DSM 1251)).